The chain runs to 320 residues: Sliding-clamp-loader large subunit (320 aa).

ATP-binding positions include 12 to 15 (EQKY), Ile-24, 53 to 58 (GTGKTT), and Arg-205.

This sequence belongs to the Tevenvirinae sliding-clamp-loader large subunit family. In terms of assembly, the sliding-clamp-loader consists of 4 large subunits and 1 small subunit. Interacts with the sliding clamp; this interaction allows the sliding-clamp-loader to open the sliding clamp. Part of the replicase complex that includes the DNA polymerase, the polymerase clamp, the clamp loader complex, the single-stranded DNA binding protein, the primase, the helicase and the helicase assembly factor.

Functionally, forms the sliding-clamp-loader together with the small subunit. Functions as an ATPase enzyme. The clamp loader holds the clamp in an open conformation and places it onto the DNA. 4 ATP molecules must bind to the sliding-clamp-loader before the latter can open the sliding clamp. ATP hydrolysis triggers the detachment of the sliding clamp from the sliding-clamp-loader, freeing the sliding clamp to track along DNA. The polypeptide is Sliding-clamp-loader large subunit (44) (Escherichia phage RB69 (Bacteriophage RB69)).